Consider the following 206-residue polypeptide: GCN5-like protein acetyltransferase Rv2170 (206 aa).

One can recognise an N-acetyltransferase domain in the interval 44–205 (EHIRRRGWQA…AFAILGRTLP (162 aa)). Tyr176 acts as the Proton donor in catalysis.

The protein belongs to the acetyltransferase family.

It catalyses the reaction L-lysyl-[protein] + acetyl-CoA = N(6)-acetyl-L-lysyl-[protein] + CoA + H(+). The enzyme catalyses propanoyl-CoA + L-lysyl-[protein] = N(6)-propanoyl-L-lysyl-[protein] + CoA + H(+). It carries out the reaction succinyl-CoA + L-lysyl-[protein] = N(6)-succinyl-L-lysyl-[protein] + CoA + H(+). Acetyltransferase involved in the post-translational regulation of the central metabolic enzyme isocitrate dehydrogenase 1 (ICDH-1) through lysine acetylation. Catalyzes the acetylation of ICDH-1 at Lys-30 and Lys-129, using acetyl-CoA as a donor, leading to a reduction of ICDH-1 enzyme activity. Can also use propionyl-CoA and succinyl-CoA as donors. Cannot act on the isocitrate dehydrogenase 2 (ICDH-2). Might play a role in regulating the TCA cycle and methylcitrate cycle when M.tuberculosis utilizes fatty acid as carbon source. In terms of biological role, in addition, it can acetylate the amino group of isoniazid (INH), one of the first-line drugs used for the treatment of tuberculosis, thereby canceling out the drug toxicity. Acts by catalyzing the transfer of an acetyl group from acetyl-CoA to INH. Following acetylation, INH is broken down into isonicotinic acid and acetylhydrazine. M.smegmatis and M.tuberculosis H37Ra strains overexpressing Rv2170 are resistant to INH. Has little or no acetyltransferase activity with other antibiotics such as streptomycin, neomycin, kanamycin, amikacin, apramycin and gentamicin. The sequence is that of GCN5-like protein acetyltransferase Rv2170 from Mycobacterium tuberculosis (strain ATCC 25618 / H37Rv).